A 185-amino-acid polypeptide reads, in one-letter code: Elongation factor P (185 aa).

It belongs to the elongation factor P family.

It is found in the cytoplasm. It participates in protein biosynthesis; polypeptide chain elongation. Functionally, involved in peptide bond synthesis. Stimulates efficient translation and peptide-bond synthesis on native or reconstituted 70S ribosomes in vitro. Probably functions indirectly by altering the affinity of the ribosome for aminoacyl-tRNA, thus increasing their reactivity as acceptors for peptidyl transferase. The polypeptide is Elongation factor P (efp) (Thermotoga maritima (strain ATCC 43589 / DSM 3109 / JCM 10099 / NBRC 100826 / MSB8)).